The following is a 670-amino-acid chain: Solute carrier organic anion transporter family member 1A2 (670 aa).

Residues 1–20 are Cytoplasmic-facing; sequence MGETEKRIETHRIRCLSKLK. A helical transmembrane segment spans residues 21–40; sequence MFLLAITCAFVSKTLSGSYM. Residues 41 to 59 are Extracellular-facing; the sequence is NSMLTQIERQFNIPTSLVG. A helical membrane pass occupies residues 60 to 80; the sequence is FINGSFEIGNLLLIIFVSYFG. Residues 81–86 lie on the Cytoplasmic side of the membrane; that stretch reads TKLHRP. Residues 87–111 traverse the membrane as a helical segment; that stretch reads IMIGIGCVVMGLGCFLKSLPHFLMN. Residues 112–155 are Extracellular-facing; the sequence is QYEYESTVSVSGNLSSNSFLCMENGTQILRPTQDPSECTKEVKS. 2 N-linked (GlcNAc...) asparagine glycosylation sites follow: asparagine 124 and asparagine 135. A helical membrane pass occupies residues 156 to 184; the sequence is LMWVYVLVGNIVRGMGETPILPLGISYIE. The Cytoplasmic segment spans residues 185-203; it reads DFAKFENSPLYIGLVETGA. The chain crosses the membrane as a helical span at residues 204–224; it reads IIGPLIGLLLASFCANVYVDT. At 225–242 the chain is on the extracellular side; it reads GFVNTDDLIITPTDTRWV. A helical transmembrane segment spans residues 243-267; the sequence is GAWWFGFLICAGVNVLTAIPFFFLP. The Cytoplasmic portion of the chain corresponds to 268–311; sequence NTLPKEGLETNADIIKNENEDKQKEEVKKEKYGITKDFLPFMKS. The chain crosses the membrane as a helical span at residues 312 to 333; that stretch reads LSCNPIYMLFILVSVIQFNAFV. The Extracellular segment spans residues 334 to 353; sequence NMISFMPKYLEQQYGISSSD. The chain crosses the membrane as a helical span at residues 354 to 377; it reads AIFLMGIYNLPPICIGYIIGGLIM. Residues 378–381 are Cytoplasmic-facing; it reads KKFK. The chain crosses the membrane as a helical span at residues 382 to 405; sequence ITVKQAAHIGCWLSLLEYLLYFLS. Over 406 to 513 the chain is Extracellular; the sequence is FLMTCENSSV…PDCSLMLQYF (108 aa). N-linked (GlcNAc...) asparagine glycans are attached at residues asparagine 412 and asparagine 419. Residues 433 to 488 form the Kazal-like domain; sequence NDIFADCNVDCNCPSKIWDPVCGNNGLSYLSACLAGCETSIGTGINMVFQNCSCIQ. Intrachain disulfides connect cysteine 439/cysteine 469, cysteine 445/cysteine 465, and cysteine 454/cysteine 486. The helical transmembrane segment at 514-536 threads the bilayer; that stretch reads LILSAMSSFIYSLAAIPGYMVLL. Over 537-545 the chain is Cytoplasmic; that stretch reads RCMKSEEKS. The chain crosses the membrane as a helical span at residues 546–571; the sequence is LGVGLHTFCTRVFAGIPAPIYFGALM. Residues 572 to 605 lie on the Extracellular side of the membrane; sequence DSTCLHWGTLKCGESGACRIYDSTTFRYIYLGLP. A helical membrane pass occupies residues 606-623; that stretch reads AALRGSSFVPALIILILL. Residues 624 to 670 are Cytoplasmic-facing; it reads RKCHLPGENASSGTELIETKVKGKENECKDIYQKSTVLKDDELKTKL.

It belongs to the organo anion transporter (TC 2.A.60) family. Higher expression in the brain than in liver and kidney. Expressed in brain neurons in both cortex and hippocampus. Expressed in placental trophoblasts. Also expressed in lung and testes at lower levels. Expressed in the eye (at protein level). Expressed in the retina in the outer and inner nuclear layers, the inner plexiform layer and the ganglion cell layer. Expressed in liver and prostate. In testis, primarily localized to the basal membrane of Sertoli cells and weakly expressed in Leydig cells and within the tubules. Expressed in fetal brain and liver.

The protein localises to the cell membrane. It is found in the basal cell membrane. It catalyses the reaction taurocholate(out) = taurocholate(in). The enzyme catalyses glycocholate(out) = glycocholate(in). It carries out the reaction taurochenodeoxycholate(out) = taurochenodeoxycholate(in). The catalysed reaction is tauroursodeoxycholate(out) = tauroursodeoxycholate(in). It catalyses the reaction dehydroepiandrosterone 3-sulfate(out) = dehydroepiandrosterone 3-sulfate(in). The enzyme catalyses estrone 3-sulfate(out) = estrone 3-sulfate(in). It carries out the reaction 3,3',5'-triiodo-L-thyronine(out) = 3,3',5'-triiodo-L-thyronine(in). The catalysed reaction is L-thyroxine(out) = L-thyroxine(in). It catalyses the reaction taurodeoxycholate(out) = taurodeoxycholate(in). The enzyme catalyses glycodeoxycholate(out) = glycodeoxycholate(in). It carries out the reaction glycochenodeoxycholate(out) = glycochenodeoxycholate(in). The catalysed reaction is glycoursodeoxycholate(out) = glycoursodeoxycholate(in). It catalyses the reaction 17beta-estradiol 17-O-(beta-D-glucuronate)(out) = 17beta-estradiol 17-O-(beta-D-glucuronate)(in). The enzyme catalyses prostaglandin E2(out) = prostaglandin E2(in). It carries out the reaction substance P(out) = substance P(in). Transport activity is inhibited by the grapefruit juice component naringin. In terms of biological role, na(+)-independent transporter that mediates the cellular uptake of a broad range of organic anions such as the endogenous bile salts cholate and deoxycholate, either in their unconjugated or conjugated forms (taurocholate and glycocholate), at the plasmam membrane. Responsible for intestinal absorption of bile acids. Transports dehydroepiandrosterone 3-sulfate (DHEAS), a major circulating steroid secreted by the adrenal cortex, as well as estrone 3-sulfate and 17beta-estradiol 17-O-(beta-D-glucuronate). Mediates apical uptake of all-trans-retinol (atROL) across human retinal pigment epithelium, which is essential to maintaining the integrity of the visual cycle and thus vision. Involved in the uptake of clinically used drugs. Capable of thyroid hormone transport (both T3 or 3,3',5'-triiodo-L-thyronine, and T4 or L-tyroxine). Also transports prostaglandin E2. Plays roles in blood-brain and -cerebrospinal fluid barrier transport of organic anions and signal mediators, and in hormone uptake by neural cells. May also play a role in the reuptake of neuropeptides such as substance P/TAC1 and vasoactive intestinal peptide/VIP released from retinal neurons. May play an important role in plasma and tissue distribution of the structurally diverse chemotherapeutic drugs methotrexate and paclitaxel. Shows a pH-sensitive substrate specificity which may be ascribed to the protonation state of the binding site and leads to a stimulation of substrate transport in an acidic microenvironment. Hydrogencarbonate/HCO3(-) acts as the probable counteranion that exchanges for organic anions. May contribute to regulate the transport of organic compounds in testis across the blood-testis-barrier. The protein is Solute carrier organic anion transporter family member 1A2 (SLCO1A2) of Homo sapiens (Human).